The following is a 450-amino-acid chain: Solute carrier family 52, riboflavin transporter, member 2 (450 aa).

The next 5 helical transmembrane spans lie at 14 to 34, 47 to 67, 86 to 106, 112 to 132, and 147 to 167; these read LLVA…WVEL, LPSY…LVTL, GLGI…APVA, VAFL…NVTF, and FFLG…GQGV. The N-linked (GlcNAc...) asparagine glycan is linked to Asn-178. A helical transmembrane segment spans residues 201–221; that stretch reads FFWVLTALLGTSAAAFQGLLL. Residues 227–236 are compositionally biased toward low complexity; sequence TSEPTTGTGL. Residues 227 to 264 form a disordered region; sequence TSEPTTGTGLRVETPGTEEEEEEEEASPLQEPPGQVAG. A compositionally biased stretch (acidic residues) spans 242–252; sequence GTEEEEEEEEA. A run of 5 helical transmembrane segments spans residues 282–302, 317–337, 344–364, 369–389, and 409–429; these read ACLL…LPAV, LAVV…MAVL, LCGL…LAAL, PLVG…LCAG, and ALLA…VAMF.

Belongs to the riboflavin transporter family.

It is found in the cell membrane. It catalyses the reaction riboflavin(in) = riboflavin(out). Its activity is regulated as follows. Riboflavin transport is Na(+)-independent but moderately pH-sensitive. Activity is strongly inhibited by riboflavin analogs, such as lumiflavin. Weakly inhibited by flavin adenine dinucleotide (FAD) and flavin mononucleotide (FMN). Plasma membrane transporter mediating the uptake by cells of the water soluble vitamin B2/riboflavin that plays a key role in biochemical oxidation-reduction reactions of the carbohydrate, lipid, and amino acid metabolism. May also act as a receptor for 4-hydroxybutyrate. This chain is Solute carrier family 52, riboflavin transporter, member 2 (Slc52a2), found in Mus musculus (Mouse).